Reading from the N-terminus, the 614-residue chain is Beta-glucosidase 33 (614 aa).

The N-terminal stretch at 1–26 (MATATLTLFLGLLALTSTILSFNADA) is a signal peptide. Residues glutamine 113, histidine 217, and 262 to 263 (NE) each bind a beta-D-glucoside. The Proton donor role is filled by glutamate 263. Residues cysteine 282 and cysteine 290 are joined by a disulfide bond. Residue asparagine 344 is glycosylated (N-linked (GlcNAc...) asparagine). Tyrosine 407 contacts a beta-D-glucoside. N-linked (GlcNAc...) asparagine glycosylation is found at asparagine 419, asparagine 432, and asparagine 439. A beta-D-glucoside is bound at residue glutamate 479. The Nucleophile role is filled by glutamate 479. Asparagine 491 carries N-linked (GlcNAc...) asparagine glycosylation. A beta-D-glucoside-binding positions include tryptophan 529, 536 to 537 (EW), and phenylalanine 545.

This sequence belongs to the glycosyl hydrolase 1 family.

The catalysed reaction is Hydrolysis of terminal, non-reducing beta-D-glucosyl residues with release of beta-D-glucose.. The polypeptide is Beta-glucosidase 33 (Arabidopsis thaliana (Mouse-ear cress)).